We begin with the raw amino-acid sequence, 130 residues long: Protein ApaG (130 aa).

An ApaG domain is found at 3–127 (RAVTRRIEVT…FSLDSPEGKR (125 aa)).

The chain is Protein ApaG from Rhodopseudomonas palustris (strain ATCC BAA-98 / CGA009).